The sequence spans 316 residues: Zinc finger protein 330 (316 aa).

The disordered stretch occupies residues 1 to 24; that stretch reads MPKKKTGARKKAENRREREKQLRA. The short motif at 3 to 11 is the Nuclear localization signal element; it reads KKKTGARKK. The span at 10 to 22 shows a compositional bias: basic and acidic residues; it reads KKAENRREREKQL. C4-type zinc fingers lie at residues 42-58, 67-104, 129-149, and 175-189; these read CDKC…CYFC, CAQC…CDFC, CVEC…CSFC, and CVSC…CLRC. Positions 227 to 299 are disordered; it reads SMSTRSLKFG…ESSDLFNNLN (73 aa). The span at 268–291 shows a compositional bias: acidic residues; that stretch reads DDDEEEDEAEDEEEEDGKDSDAES. Ser287 bears the Phosphoserine mark.

It belongs to the NOA36 family.

It is found in the nucleus. The protein resides in the nucleolus. It localises to the chromosome. The protein localises to the centromere. The chain is Zinc finger protein 330 (Znf330) from Mus musculus (Mouse).